Reading from the N-terminus, the 511-residue chain is Arabinose import ATP-binding protein AraG (511 aa).

ABC transporter domains are found at residues 5 to 240 and 240 to 501; these read LEFR…MVGR and RQID…LRPR. 37 to 44 is an ATP binding site; sequence GENGAGKS.

The protein belongs to the ABC transporter superfamily. Arabinose importer (TC 3.A.1.2.2) family. In terms of assembly, the complex is composed of two ATP-binding proteins (AraG), two transmembrane proteins (AraH) and a solute-binding protein (AraF).

It is found in the cell inner membrane. The catalysed reaction is L-arabinose(out) + ATP + H2O = L-arabinose(in) + ADP + phosphate + H(+). In terms of biological role, part of the ABC transporter complex AraFGH involved in arabinose import. Responsible for energy coupling to the transport system. The polypeptide is Arabinose import ATP-binding protein AraG (Ralstonia nicotianae (strain ATCC BAA-1114 / GMI1000) (Ralstonia solanacearum)).